The primary structure comprises 345 residues: MRFKCFGSEETEQSSKIDKSIETDRRKLRKDVKLLLLGPGESGKSTIFKQMKIIQEDGGYSVEELLEYRAFVYSNCISQMEALLTASAKLNIELEVENKQRAANVLRRTIGNEPWLLLAADIKHLWEDKGIKETYAQKDKHFQLNDSAAYFFDNIDRYMREDFVPNEQDVLRCRVRTTGIQESEFTFDKIRLKIVDVGGQRSQRRKWIHCFDCVTAVIFVAAMSDYDQVLREDESVNRTRESLALFKEIVNCDYFKETPIVLFLNKKDLFKEKLKRVPLQSCFSDYTGPNKYKDAAMFIQSQYLAQGPSPRTIYTHATCAVDTENIKFVFRAVRQTILSQALEHF.

The G-alpha domain maps to Lys30–Phe345. The tract at residues Lys33 to Thr46 is G1 motif. Residues Gly38–Ser45, Leu171–Thr177, Asp196–Gln200, Asn265–Asp268, and Ala320 contribute to the GTP site. The Mg(2+) site is built by Ser45 and Thr177. The G2 motif stretch occupies residues Asp169–Thr177. The G3 motif stretch occupies residues Leu192 to Arg201. The segment at Val261–Asp268 is G4 motif. A G5 motif region spans residues Thr318–Thr323.

Belongs to the G-alpha family. As to quaternary structure, g proteins are composed of 3 units; alpha, beta and gamma. The alpha chain contains the guanine nucleotide binding site.

Guanine nucleotide-binding proteins (G proteins) are involved as modulators or transducers in various transmembrane signaling systems. G alpha-4 plays a role in morphogenesis of the multicellular structure. The chain is Guanine nucleotide-binding protein alpha-4 subunit (gpaD) from Dictyostelium discoideum (Social amoeba).